A 348-amino-acid chain; its full sequence is Phospho-2-dehydro-3-deoxyheptonate aldolase, Trp-sensitive (348 aa).

Belongs to the class-I DAHP synthase family.

The enzyme catalyses D-erythrose 4-phosphate + phosphoenolpyruvate + H2O = 7-phospho-2-dehydro-3-deoxy-D-arabino-heptonate + phosphate. It functions in the pathway metabolic intermediate biosynthesis; chorismate biosynthesis; chorismate from D-erythrose 4-phosphate and phosphoenolpyruvate: step 1/7. Its function is as follows. Stereospecific condensation of phosphoenolpyruvate (PEP) and D-erythrose-4-phosphate (E4P) giving rise to 3-deoxy-D-arabino-heptulosonate-7-phosphate (DAHP). In Escherichia coli O6:H1 (strain CFT073 / ATCC 700928 / UPEC), this protein is Phospho-2-dehydro-3-deoxyheptonate aldolase, Trp-sensitive (aroH).